Here is a 31-residue protein sequence, read N- to C-terminus: Cytochrome b6-f complex subunit 6 (31 aa).

Residues 4–24 (IISYFLFLIGALTLALVLFIG) traverse the membrane as a helical segment.

Belongs to the PetL family. The 4 large subunits of the cytochrome b6-f complex are cytochrome b6, subunit IV (17 kDa polypeptide, PetD), cytochrome f and the Rieske protein, while the 4 small subunits are PetG, PetL, PetM and PetN. The complex functions as a dimer.

It is found in the plastid. Its subcellular location is the chloroplast thylakoid membrane. Its function is as follows. Component of the cytochrome b6-f complex, which mediates electron transfer between photosystem II (PSII) and photosystem I (PSI), cyclic electron flow around PSI, and state transitions. PetL is important for photoautotrophic growth as well as for electron transfer efficiency and stability of the cytochrome b6-f complex. The protein is Cytochrome b6-f complex subunit 6 of Marchantia polymorpha (Common liverwort).